The primary structure comprises 1079 residues: Error-prone DNA polymerase (1079 aa).

The protein belongs to the DNA polymerase type-C family. DnaE2 subfamily.

The protein localises to the cytoplasm. It carries out the reaction DNA(n) + a 2'-deoxyribonucleoside 5'-triphosphate = DNA(n+1) + diphosphate. Its function is as follows. DNA polymerase involved in damage-induced mutagenesis and translesion synthesis (TLS). It is not the major replicative DNA polymerase. The polypeptide is Error-prone DNA polymerase (Ralstonia pickettii (strain 12J)).